Consider the following 160-residue polypeptide: MGVTKKPDLTDPVLRAKLAKGMGHNYYGEPAWPNDLLYIFPVVILGTIACNVGLAVLEPSMIGEPADPFATPLEILPEWYFFPVFQILRTVPNKLLGVLLMVSVPAGLLTVPFLENVNKFQNPFRRPVATTVFLIGTVVALWLGIGATLPIEKSLTLGLF.

Transmembrane regions (helical) follow at residues Leu36 to Val56, Leu95 to Glu115, and Thr131 to Ile151.

It belongs to the cytochrome b family. PetD subfamily. As to quaternary structure, the 4 large subunits of the cytochrome b6-f complex are cytochrome b6, subunit IV (17 kDa polypeptide, petD), cytochrome f and the Rieske protein, while the 4 small subunits are petG, petL, petM and petN. The complex functions as a dimer.

The protein localises to the plastid. Its subcellular location is the chloroplast thylakoid membrane. Functionally, component of the cytochrome b6-f complex, which mediates electron transfer between photosystem II (PSII) and photosystem I (PSI), cyclic electron flow around PSI, and state transitions. This chain is Cytochrome b6-f complex subunit 4, found in Pisum sativum (Garden pea).